Consider the following 156-residue polypeptide: MKRSCIYPGTFDPITNGHLDVIKRAVKIFDRVIVAVAKSDSKNPMFGFDERVTMVERSVEGLKNVSVEGFDNLLVDFAKSHEINTVIRGLRAVSDFEYELQIGYANAALWSEFETVYLMPSLKNAFISSSIVRSVLRHDGDVSALVPSQIFSLLKG.

Residue Thr-10 participates in substrate binding. Residues 10 to 11 (TF) and His-18 each bind ATP. Lys-42, Leu-74, and Arg-88 together coordinate substrate. Residues 89–91 (GLR), Glu-99, and 124–130 (NAFISSS) contribute to the ATP site.

Belongs to the bacterial CoaD family. In terms of assembly, homohexamer. Mg(2+) serves as cofactor.

Its subcellular location is the cytoplasm. The enzyme catalyses (R)-4'-phosphopantetheine + ATP + H(+) = 3'-dephospho-CoA + diphosphate. It participates in cofactor biosynthesis; coenzyme A biosynthesis; CoA from (R)-pantothenate: step 4/5. Reversibly transfers an adenylyl group from ATP to 4'-phosphopantetheine, yielding dephospho-CoA (dPCoA) and pyrophosphate. The polypeptide is Phosphopantetheine adenylyltransferase (Campylobacter curvus (strain 525.92)).